The primary structure comprises 330 residues: Adenylate isopentenyltransferase 8, chloroplastic (330 aa).

A chloroplast-targeting transit peptide spans methionine 1–valine 35. Glycine 50–serine 57 provides a ligand contact to ATP.

The protein belongs to the IPP transferase family. As to expression, expressed in roots and in immature seeds with highest expression in the chalazal endosperm.

The protein resides in the plastid. It is found in the chloroplast. The catalysed reaction is dimethylallyl diphosphate + ADP = N(6)-(dimethylallyl)adenosine 5'-diphosphate + diphosphate. The enzyme catalyses dimethylallyl diphosphate + ATP = N(6)-(dimethylallyl)adenosine 5'-triphosphate + diphosphate. Functionally, involved in cytokinin biosynthesis. Catalyzes the transfer of an isopentenyl group from dimethylallyl diphosphate (DMAPP) to ATP and ADP. In Arabidopsis thaliana (Mouse-ear cress), this protein is Adenylate isopentenyltransferase 8, chloroplastic (IPT8).